A 271-amino-acid polypeptide reads, in one-letter code: 3-methyl-2-oxobutanoate hydroxymethyltransferase (271 aa).

The Mg(2+) site is built by Asp-49 and Asp-88. Residues 49-50 (DS), Asp-88, and Lys-118 contribute to the 3-methyl-2-oxobutanoate site. Glu-120 contacts Mg(2+). The Proton acceptor role is filled by Glu-187.

It belongs to the PanB family. In terms of assembly, homodecamer; pentamer of dimers. Mg(2+) is required as a cofactor.

It localises to the cytoplasm. The enzyme catalyses 3-methyl-2-oxobutanoate + (6R)-5,10-methylene-5,6,7,8-tetrahydrofolate + H2O = 2-dehydropantoate + (6S)-5,6,7,8-tetrahydrofolate. It participates in cofactor biosynthesis; (R)-pantothenate biosynthesis; (R)-pantoate from 3-methyl-2-oxobutanoate: step 1/2. Functionally, catalyzes the reversible reaction in which hydroxymethyl group from 5,10-methylenetetrahydrofolate is transferred onto alpha-ketoisovalerate to form ketopantoate. In Bartonella bacilliformis (strain ATCC 35685 / KC583 / Herrer 020/F12,63), this protein is 3-methyl-2-oxobutanoate hydroxymethyltransferase.